A 235-amino-acid chain; its full sequence is Ornithine decarboxylase antizyme 3 (235 aa).

A phosphoserine mark is found at S9 and S12.

Belongs to the ODC antizyme family. In terms of assembly, interacts with ODC1 and thereby sterically blocks ODC homodimerization. Interacts with AZIN2; this interaction disrupts the interaction between the antizyme and ODC1. Interacts with GGN. Testis specific.

It localises to the nucleus. It is found in the cytoplasm. Ornithine decarboxylase (ODC) antizyme protein that negatively regulates ODC activity and intracellular polyamine biosynthesis and uptake in response to increased intracellular polyamine levels. Binds to ODC monomers, inhibiting the assembly of the functional ODC homodimers. Does not target the ODC monomers for degradation, which allows a protein synthesis-independent restoration of ODC activity. Stabilizes AZIN2 by interfering with its ubiquitination. Involved in the translocation of AZNI2 from ER-Golgi intermediate compartment (ERGIC) to the cytosol. Probably plays a key role in spermatogenesis by regulating the intracellular concentration of polyamines in haploid germ cells. The protein is Ornithine decarboxylase antizyme 3 (OAZ3) of Homo sapiens (Human).